A 335-amino-acid chain; its full sequence is Glyceraldehyde-3-phosphate dehydrogenase (335 aa).

NAD(+) is bound by residues 15-16 (RI) and aspartate 37. D-glyceraldehyde 3-phosphate contacts are provided by residues 155 to 157 (SCT), threonine 186, arginine 201, 214 to 215 (TG), and arginine 237. Cysteine 156 functions as the Nucleophile in the catalytic mechanism. Positions 301 and 318 each coordinate NAD(+).

It belongs to the glyceraldehyde-3-phosphate dehydrogenase family. Homotetramer.

Its subcellular location is the cytoplasm. The catalysed reaction is D-glyceraldehyde 3-phosphate + phosphate + NADP(+) = (2R)-3-phospho-glyceroyl phosphate + NADPH + H(+). It carries out the reaction D-glyceraldehyde 3-phosphate + phosphate + NAD(+) = (2R)-3-phospho-glyceroyl phosphate + NADH + H(+). The protein operates within carbohydrate degradation; glycolysis; pyruvate from D-glyceraldehyde 3-phosphate: step 1/5. The polypeptide is Glyceraldehyde-3-phosphate dehydrogenase (gap) (Haloarcula vallismortis (Halobacterium vallismortis)).